We begin with the raw amino-acid sequence, 665 residues long: Coiled-coil domain-containing protein 138 (665 aa).

Threonine 48 is modified (phosphothreonine). Serine 49 carries the phosphoserine modification. Residues 198 to 323 adopt a coiled-coil conformation; the sequence is QQKFAEELQK…YEFMTIQRLK (126 aa). Residue serine 469 is modified to Phosphoserine.

In Homo sapiens (Human), this protein is Coiled-coil domain-containing protein 138 (CCDC138).